A 284-amino-acid chain; its full sequence is Ribosomal RNA small subunit methyltransferase A (284 aa).

Asparagine 33, leucine 35, glycine 60, glutamate 81, aspartate 101, and asparagine 124 together coordinate S-adenosyl-L-methionine.

This sequence belongs to the class I-like SAM-binding methyltransferase superfamily. rRNA adenine N(6)-methyltransferase family. RsmA subfamily.

The protein resides in the cytoplasm. It catalyses the reaction adenosine(1518)/adenosine(1519) in 16S rRNA + 4 S-adenosyl-L-methionine = N(6)-dimethyladenosine(1518)/N(6)-dimethyladenosine(1519) in 16S rRNA + 4 S-adenosyl-L-homocysteine + 4 H(+). In terms of biological role, specifically dimethylates two adjacent adenosines (A1518 and A1519) in the loop of a conserved hairpin near the 3'-end of 16S rRNA in the 30S particle. May play a critical role in biogenesis of 30S subunits. In Chlamydia felis (strain Fe/C-56) (Chlamydophila felis), this protein is Ribosomal RNA small subunit methyltransferase A.